Consider the following 576-residue polypeptide: Minor capsid protein P2 (576 aa).

Residues 13 to 35 (LFLYTNSIEMELLAVASIIGYGL) are hydrophobic. Positions 322–348 (TRGRPRTGDGDTEPIINPNGERDGTGS) are disordered.

In terms of assembly, interacts with the major capsid protein.

It localises to the virion. One of the minor capsid proteins that constitute a network internal to the major capsid proteins and outside the lipid membrane. The minor capsid proteins glue and stabilize the capsomers. Also acts as a molecular tape measure protein that determines the size of the viral capsid. In Chlorella (PBCV-1), this protein is Minor capsid protein P2.